A 210-amino-acid polypeptide reads, in one-letter code: Putative 4-hydroxy-4-methyl-2-oxoglutarate aldolase (210 aa).

Substrate contacts are provided by residues 87–90 (GDFV) and Arg109. An a divalent metal cation-binding site is contributed by Asp110.

It belongs to the class II aldolase/RraA-like family. Homotrimer. A divalent metal cation is required as a cofactor.

The catalysed reaction is 4-hydroxy-4-methyl-2-oxoglutarate = 2 pyruvate. It catalyses the reaction oxaloacetate + H(+) = pyruvate + CO2. Its function is as follows. Catalyzes the aldol cleavage of 4-hydroxy-4-methyl-2-oxoglutarate (HMG) into 2 molecules of pyruvate. Also contains a secondary oxaloacetate (OAA) decarboxylase activity due to the common pyruvate enolate transition state formed following C-C bond cleavage in the retro-aldol and decarboxylation reactions. This is Putative 4-hydroxy-4-methyl-2-oxoglutarate aldolase from Halalkalibacterium halodurans (strain ATCC BAA-125 / DSM 18197 / FERM 7344 / JCM 9153 / C-125) (Bacillus halodurans).